A 216-amino-acid polypeptide reads, in one-letter code: Probable nicotinate-nucleotide adenylyltransferase (216 aa).

Belongs to the NadD family.

It catalyses the reaction nicotinate beta-D-ribonucleotide + ATP + H(+) = deamido-NAD(+) + diphosphate. It participates in cofactor biosynthesis; NAD(+) biosynthesis; deamido-NAD(+) from nicotinate D-ribonucleotide: step 1/1. Functionally, catalyzes the reversible adenylation of nicotinate mononucleotide (NaMN) to nicotinic acid adenine dinucleotide (NaAD). This is Probable nicotinate-nucleotide adenylyltransferase from Klebsiella pneumoniae subsp. pneumoniae (strain ATCC 700721 / MGH 78578).